We begin with the raw amino-acid sequence, 494 residues long: Transcriptional regulator of yeast form adherence 3 (494 aa).

An SPX domain is found at 1–360 (MKFAKTLERT…SLGIQKTFPK (360 aa)). Residues 398–437 (CPICMNIAYKPIRLSCGHLFCVRCLVKMKQDDKTSCPLCR) form an RING-type zinc finger.

Its subcellular location is the nucleus. Its function is as follows. Transcription factor required for yeast cell adherence to silicone substrate. The chain is Transcriptional regulator of yeast form adherence 3 (TRY3) from Candida albicans (strain SC5314 / ATCC MYA-2876) (Yeast).